The following is a 445-amino-acid chain: Glycine--tRNA ligase (445 aa).

Residues Arg97 and Glu145 each contribute to the substrate site. ATP is bound by residues 177-179 (RNE), 187-192 (FRTCEF), 262-263 (EV), and 308-311 (GLTR). 192-196 (FEQME) serves as a coordination point for substrate. 304-308 (ETSAG) is a binding site for substrate.

It belongs to the class-II aminoacyl-tRNA synthetase family. In terms of assembly, homodimer.

Its subcellular location is the cytoplasm. The enzyme catalyses tRNA(Gly) + glycine + ATP = glycyl-tRNA(Gly) + AMP + diphosphate. Catalyzes the attachment of glycine to tRNA(Gly). This chain is Glycine--tRNA ligase, found in Borreliella burgdorferi (strain ZS7) (Borrelia burgdorferi).